A 144-amino-acid chain; its full sequence is Large ribosomal subunit protein uL11 (144 aa).

It belongs to the universal ribosomal protein uL11 family. Part of the ribosomal stalk of the 50S ribosomal subunit. Interacts with L10 and the large rRNA to form the base of the stalk. L10 forms an elongated spine to which L12 dimers bind in a sequential fashion forming a multimeric L10(L12)X complex. Post-translationally, one or more lysine residues are methylated.

Forms part of the ribosomal stalk which helps the ribosome interact with GTP-bound translation factors. This is Large ribosomal subunit protein uL11 from Rickettsia bellii (strain OSU 85-389).